The chain runs to 336 residues: N-acetylornithine carbamoyltransferase (336 aa).

Carbamoyl phosphate is bound by residues 49–52 (SMRT), Trp77, and Arg112. Glu144 is a binding site for N(2)-acetyl-L-ornithine. Carbamoyl phosphate is bound at residue 148–151 (HPCQ). Positions 252 and 295 each coordinate N(2)-acetyl-L-ornithine. 294–295 (CL) contributes to the carbamoyl phosphate binding site. Lys302 is modified (N6-carboxylysine). Residue Arg322 participates in carbamoyl phosphate binding.

The protein belongs to the aspartate/ornithine carbamoyltransferase superfamily. AOTCase family. In terms of assembly, homotrimer.

Its subcellular location is the cytoplasm. It carries out the reaction N(2)-acetyl-L-ornithine + carbamoyl phosphate = N(2)-acetyl-L-citrulline + phosphate + H(+). Its pathway is amino-acid biosynthesis; L-arginine biosynthesis. With respect to regulation, carboxylation at Lys-302 increases the catalytic activity of the enzyme. Its function is as follows. Catalyzes the transfer of the carbamoyl group from carbamoyl phosphate to the delta-amino group of N(2)-acetyl-L-ornithine to produce N(2)-acetyl-L-citrulline. This is a step in an alternative arginine biosynthesis pathway. The enzyme has no activity with ornithine. This chain is N-acetylornithine carbamoyltransferase, found in Xylella fastidiosa (strain 9a5c).